A 478-amino-acid polypeptide reads, in one-letter code: TFIIA-alpha and beta-like factor (478 aa).

The disordered stretch occupies residues 309-427; sequence VKQPRNIEEP…SGDDVSEQDV (119 aa). A compositionally biased stretch (polar residues) spans 390 to 401; that stretch reads SISNEDSATNSS. The segment covering 411 to 427 has biased composition (acidic residues); the sequence is VEEDPLNSGDDVSEQDV.

The protein belongs to the TFIIA subunit 1 family. As to expression, testis specific. Detected in adult testis mostly in round and elongating spermatids (at protein level). Detected in testis.

Its subcellular location is the nucleus. Functionally, may function as a testis specific transcription factor. Binds DNA in conjunction with GTF2A2 and TBP (the TATA-binding protein) and together with GTF2A2, allows mRNA transcription. This Homo sapiens (Human) protein is TFIIA-alpha and beta-like factor (GTF2A1L).